A 200-amino-acid polypeptide reads, in one-letter code: UPF0316 protein Mhun_0543 (200 aa).

3 helical membrane passes run 3–23 (VGFL…IFLA), 44–64 (FIAP…IGQV), and 71–91 (PICY…GMEL).

The protein belongs to the UPF0316 family.

The protein localises to the cell membrane. The chain is UPF0316 protein Mhun_0543 from Methanospirillum hungatei JF-1 (strain ATCC 27890 / DSM 864 / NBRC 100397 / JF-1).